Here is a 121-residue protein sequence, read N- to C-terminus: Ribosome-binding factor A (121 aa).

Belongs to the RbfA family. In terms of assembly, monomer. Binds 30S ribosomal subunits, but not 50S ribosomal subunits or 70S ribosomes.

The protein localises to the cytoplasm. One of several proteins that assist in the late maturation steps of the functional core of the 30S ribosomal subunit. Associates with free 30S ribosomal subunits (but not with 30S subunits that are part of 70S ribosomes or polysomes). Required for efficient processing of 16S rRNA. May interact with the 5'-terminal helix region of 16S rRNA. The chain is Ribosome-binding factor A from Lactobacillus acidophilus (strain ATCC 700396 / NCK56 / N2 / NCFM).